The primary structure comprises 352 residues: Thrombopoietin (352 aa).

Positions 1 to 23 are cleaved as a signal peptide; the sequence is MELTELLLVVMLLLTARLDPCLP. 2 cysteine pairs are disulfide-bonded: Cys-28/Cys-172 and Cys-50/Cys-106. N-linked (GlcNAc...) asparagine glycosylation is found at Asn-185, Asn-197, Asn-206, Asn-234, and Asn-255. Positions 233–245 are enriched in polar residues; sequence LNQTSRSLNQTPG. Disordered regions lie at residues 233–259 and 292–352; these read LNQT…GTHG and YSPS…SQEE. The span at 311 to 327 shows a compositional bias: pro residues; that stretch reads PTSPTPQNPLQPPPPDP. Asn-332 and Asn-347 each carry an N-linked (GlcNAc...) asparagine glycan.

Belongs to the EPO/TPO family.

It is found in the secreted. In terms of biological role, lineage-specific cytokine affecting the proliferation and maturation of megakaryocytes from their committed progenitor cells. It acts at a late stage of megakaryocyte development. It may be the major physiological regulator of circulating platelets. This is Thrombopoietin (THPO) from Canis lupus familiaris (Dog).